A 441-amino-acid polypeptide reads, in one-letter code: MSERSDLLHFKFENYGDSMLQKMNKLREENKFCDVTVLIDDIEVQGHKIVFAAGSPFLRDQFLLNDSREVKISILQSSEVGRQLLLSCYSGVLEFPEMELVNYLTAASFLQMSHIVERCTQALWKFIKPKQPMDSKEGCEPQSASPQSKEQQGDARGSPKQDSPCIHPSEDSMDMEDSDIQIVKVESIGDVSEVRSKKDQNQFISSEPTALHSSEPQHSLINSTVENRVSEIEQNHLHNYALSYTGSDNIIMASKDVFGPNIRGVDKGLQWHHQCPKCTRVFRHLENYANHLKMHKLFMCLLCGKTFTQKGNLHRHMRVHAGIKPFQCKICGKTFSQKCSLQDHLNLHSGDKPHKCNYCDMVFAHKPVLRKHLKQLHGKNSFDNANERNVQDLTVDFDSFACTTVTDSKGCQPQPDATQVLDAGKLAQAVLNLRNDSTCVN.

The BTB domain occupies 33–97 (CDVTVLIDDI…CYSGVLEFPE (65 aa)). The tract at residues 134–177 (DSKEGCEPQSASPQSKEQQGDARGSPKQDSPCIHPSEDSMDMED) is disordered. Lysine 184 is covalently cross-linked (Glycyl lysine isopeptide (Lys-Gly) (interchain with G-Cter in SUMO2)). Positions 194–216 (VRSKKDQNQFISSEPTALHSSEP) are disordered. Polar residues predominate over residues 201–216 (NQFISSEPTALHSSEP). Residue lysine 255 forms a Glycyl lysine isopeptide (Lys-Gly) (interchain with G-Cter in SUMO2) linkage. C2H2-type zinc fingers lie at residues 273–295 (HQCP…LKMH), 298–320 (FMCL…MRVH), 326–348 (FQCK…LNLH), and 354–377 (HKCN…KQLH). Lysine 329 is covalently cross-linked (Glycyl lysine isopeptide (Lys-Gly) (interchain with G-Cter in SUMO2)).

Ubiquitous.

It localises to the nucleus. Its function is as follows. May be involved in transcriptional regulation. The polypeptide is Zinc finger and BTB domain-containing protein 26 (ZBTB26) (Homo sapiens (Human)).